Consider the following 409-residue polypeptide: Dual-specificity RNA methyltransferase RlmN (409 aa).

Glu-117 acts as the Proton acceptor in catalysis. Residues 128 to 377 (LNGRKTLCIS…CTIRQTRGDD (250 aa)) form the Radical SAM core domain. Cys-135 and Cys-382 are joined by a disulfide. [4Fe-4S] cluster contacts are provided by Cys-142, Cys-146, and Cys-149. Residues 205 to 206 (GE), Ser-237, 259 to 261 (SLH), and Asn-339 contribute to the S-adenosyl-L-methionine site. Cys-382 functions as the S-methylcysteine intermediate in the catalytic mechanism.

The protein belongs to the radical SAM superfamily. RlmN family. [4Fe-4S] cluster is required as a cofactor.

It is found in the cytoplasm. It carries out the reaction adenosine(2503) in 23S rRNA + 2 reduced [2Fe-2S]-[ferredoxin] + 2 S-adenosyl-L-methionine = 2-methyladenosine(2503) in 23S rRNA + 5'-deoxyadenosine + L-methionine + 2 oxidized [2Fe-2S]-[ferredoxin] + S-adenosyl-L-homocysteine. The enzyme catalyses adenosine(37) in tRNA + 2 reduced [2Fe-2S]-[ferredoxin] + 2 S-adenosyl-L-methionine = 2-methyladenosine(37) in tRNA + 5'-deoxyadenosine + L-methionine + 2 oxidized [2Fe-2S]-[ferredoxin] + S-adenosyl-L-homocysteine. Its function is as follows. Specifically methylates position 2 of adenine 2503 in 23S rRNA and position 2 of adenine 37 in tRNAs. m2A2503 modification seems to play a crucial role in the proofreading step occurring at the peptidyl transferase center and thus would serve to optimize ribosomal fidelity. The sequence is that of Dual-specificity RNA methyltransferase RlmN from Psychrobacter arcticus (strain DSM 17307 / VKM B-2377 / 273-4).